Consider the following 487-residue polypeptide: L-tartrate/succinate antiporter (487 aa).

Helical transmembrane passes span 10 to 30 (YLAP…AGLE), 33 to 53 (TWLY…EPVP), 54 to 74 (GAVV…WLLF), 93 to 113 (WAVS…FMFG), 137 to 157 (TLFL…VTPS), 189 to 209 (IGSY…AIFL), 236 to 256 (FLGM…LAYV), 292 to 312 (LIVG…AAMV), 313 to 333 (GYSV…DIVS), 340 to 360 (VFFW…TGFI), 370 to 390 (SLSG…FYLL), 393 to 413 (FFAS…AAAL), 418 to 438 (IPLP…SILT), and 465 to 485 (IFGL…MPVV).

The protein belongs to the SLC13A/DASS transporter (TC 2.A.47) family. DIT1 subfamily.

It localises to the cell inner membrane. It catalyses the reaction (2R,3R)-tartrate(out) + succinate(in) = (2R,3R)-tartrate(in) + succinate(out). In terms of biological role, catalyzes the uptake of tartrate in exchange for intracellular succinate. Essential for anaerobic L-tartrate fermentation. This chain is L-tartrate/succinate antiporter (ttdT), found in Shigella sonnei (strain Ss046).